The chain runs to 179 residues: UPF0303 protein P4H10.12 (179 aa).

This sequence belongs to the UPF0303 family.

This Schizosaccharomyces pombe (strain 972 / ATCC 24843) (Fission yeast) protein is UPF0303 protein P4H10.12.